The sequence spans 297 residues: 4-hydroxy-tetrahydrodipicolinate synthase (297 aa).

A pyruvate-binding site is contributed by Thr-47. Tyr-135 serves as the catalytic Proton donor/acceptor. The Schiff-base intermediate with substrate role is filled by Lys-163. A pyruvate-binding site is contributed by Ile-205.

It belongs to the DapA family. Homotetramer; dimer of dimers.

The protein resides in the cytoplasm. It catalyses the reaction L-aspartate 4-semialdehyde + pyruvate = (2S,4S)-4-hydroxy-2,3,4,5-tetrahydrodipicolinate + H2O + H(+). Its pathway is amino-acid biosynthesis; L-lysine biosynthesis via DAP pathway; (S)-tetrahydrodipicolinate from L-aspartate: step 3/4. Its function is as follows. Catalyzes the condensation of (S)-aspartate-beta-semialdehyde [(S)-ASA] and pyruvate to 4-hydroxy-tetrahydrodipicolinate (HTPA). This is 4-hydroxy-tetrahydrodipicolinate synthase from Dehalococcoides mccartyi (strain ATCC BAA-2266 / KCTC 15142 / 195) (Dehalococcoides ethenogenes (strain 195)).